We begin with the raw amino-acid sequence, 446 residues long: Phosphoglucosamine mutase (446 aa).

Ser-102 (phosphoserine intermediate) is an active-site residue. The Mg(2+) site is built by Ser-102, Asp-241, Asp-243, and Asp-245. Residue Ser-102 is modified to Phosphoserine.

Belongs to the phosphohexose mutase family. Requires Mg(2+) as cofactor. In terms of processing, activated by phosphorylation.

It carries out the reaction alpha-D-glucosamine 1-phosphate = D-glucosamine 6-phosphate. Its function is as follows. Catalyzes the conversion of glucosamine-6-phosphate to glucosamine-1-phosphate. In Idiomarina loihiensis (strain ATCC BAA-735 / DSM 15497 / L2-TR), this protein is Phosphoglucosamine mutase.